The chain runs to 310 residues: Hairy/enhancer-of-split related with YRPW motif-like protein (310 aa).

The interval 1–21 (MKRPHDYSSPDSDTDELIDVG) is disordered. Residues 12-21 (SDTDELIDVG) show a composition bias toward acidic residues. One can recognise a bHLH domain in the interval 43–98 (ARKKRRGIIEKRRRDRINHSLSELRRLVPSAFEKQGSSKLEKAEILQMTVDHLKLL). Residues 116 to 152 (YRTLGFRECVGEVVRYLSSLEGVESSDPIGARLVSHL) enclose the Orange domain. 2 stretches are compositionally biased toward low complexity: residues 182 to 192 (LQAASPPASST) and 261 to 273 (PSSSSSSSNSSPP). Disordered regions lie at residues 182–208 (LQAASPPASSTPFPPNARRDLAPHGTA) and 248–310 (HRLQ…IGAF). The segment covering 293–302 (LSSSSKSAQA) has biased composition (polar residues).

This sequence belongs to the HEY family.

It localises to the nucleus. Transcriptional repressor which functions as a downstream effector of Notch signaling. The protein is Hairy/enhancer-of-split related with YRPW motif-like protein (heyl) of Danio rerio (Zebrafish).